Here is an 846-residue protein sequence, read N- to C-terminus: Putative transcriptional regulator tpeD (846 aa).

A BED-type; degenerate zinc finger spans residues 104–166; sequence KHQSECWQHF…NCRKSVPVSK (63 aa). A disordered region spans residues 734–846; sequence RAREERDAQQ…RDEDFVYETP (113 aa). Over residues 756–769 the composition is skewed to acidic residues; the sequence is PISDSEEAESEDES. The span at 773–786 shows a compositional bias: low complexity; that stretch reads PQSPQASQARSQRS. Over residues 797–809 the composition is skewed to acidic residues; sequence PLIELDGNEEDEV.

It localises to the nucleus. Putative transcriptional regulator; part of the gene cluster that mediates the biosynthesis of polyesters containing 2,4-dihydroxy-6-(2-hydroxypropyl)benzoate and 3-hydroxybutyrate moieties, such as talapolyester G, 15G256beta and 15G256beta-2; as well as to oxidized derivatives such as 15G256alpha. The protein is Putative transcriptional regulator tpeD of Talaromyces stipitatus (strain ATCC 10500 / CBS 375.48 / QM 6759 / NRRL 1006) (Penicillium stipitatum).